The chain runs to 332 residues: Protein FAM9A (332 aa).

Basic residues predominate over residues 1–13 (MEPVGRKRSRKAA). Disordered stretches follow at residues 1-114 (MEPV…EHTG) and 186-293 (QKDD…PTGV). Composition is skewed to basic and acidic residues over residues 74–91 (GKDPVRDECEERNPFTET) and 98–114 (DEHGEREPFAEKDEHTG). Residues 196 to 217 (AAAAAAEAAAAAEAAAAAAEVI) show a composition bias toward low complexity. A compositionally biased stretch (acidic residues) spans 218–275 (VVEDEEEEEKEEEEEKEEEEEEGEEEGGGEEGEEGGGGGEGEETEEEEEEEEEEEEEE). Basic and acidic residues predominate over residues 276–285 (QIKAFQEKQK).

The protein belongs to the XLR/SYCP3 family. In terms of tissue distribution, expressed exclusively in testis.

It localises to the nucleus. Its subcellular location is the nucleolus. This chain is Protein FAM9A, found in Homo sapiens (Human).